The following is a 273-amino-acid chain: Putative pyruvate, phosphate dikinase regulatory protein (273 aa).

Glycine 153 to serine 160 lines the ADP pocket.

The protein belongs to the pyruvate, phosphate/water dikinase regulatory protein family. PDRP subfamily.

The enzyme catalyses N(tele)-phospho-L-histidyl/L-threonyl-[pyruvate, phosphate dikinase] + ADP = N(tele)-phospho-L-histidyl/O-phospho-L-threonyl-[pyruvate, phosphate dikinase] + AMP + H(+). The catalysed reaction is N(tele)-phospho-L-histidyl/O-phospho-L-threonyl-[pyruvate, phosphate dikinase] + phosphate + H(+) = N(tele)-phospho-L-histidyl/L-threonyl-[pyruvate, phosphate dikinase] + diphosphate. In terms of biological role, bifunctional serine/threonine kinase and phosphorylase involved in the regulation of the pyruvate, phosphate dikinase (PPDK) by catalyzing its phosphorylation/dephosphorylation. This is Putative pyruvate, phosphate dikinase regulatory protein from Ehrlichia ruminantium (strain Gardel).